Consider the following 170-residue polypeptide: Adenine phosphoribosyltransferase (170 aa).

This sequence belongs to the purine/pyrimidine phosphoribosyltransferase family. Homodimer.

The protein localises to the cytoplasm. The catalysed reaction is AMP + diphosphate = 5-phospho-alpha-D-ribose 1-diphosphate + adenine. It functions in the pathway purine metabolism; AMP biosynthesis via salvage pathway; AMP from adenine: step 1/1. In terms of biological role, catalyzes a salvage reaction resulting in the formation of AMP, that is energically less costly than de novo synthesis. The polypeptide is Adenine phosphoribosyltransferase (Fervidobacterium nodosum (strain ATCC 35602 / DSM 5306 / Rt17-B1)).